The sequence spans 145 residues: MPGVTVKDVNQQEFVRALAAFLKKSGKLKVPEWVDTVKLAKHKELAPYDENWFYTRAASTARHLYLRGGAGVGSMTKIYGGRQRNGVRPSHFSRGSKSVARRVLQALEGLKMVEKDQDGGRKLTPQGQRDLDRIAGQVAAANKKH.

The residue at position 23 (Lys-23) is an N6-acetyllysine. Arg-67 carries the post-translational modification Omega-N-methylarginine. N6-acetyllysine is present on residues Lys-111 and Lys-115. The residue at position 143 (Lys-143) is an N6-succinyllysine.

This sequence belongs to the eukaryotic ribosomal protein eS19 family. As to quaternary structure, component of the small ribosomal subunit. Part of the small subunit (SSU) processome, composed of more than 70 proteins and the RNA chaperone small nucleolar RNA (snoRNA) U3. Interacts with RPS19BP1.

The protein resides in the cytoplasm. The protein localises to the nucleus. It is found in the nucleolus. Component of the small ribosomal subunit. The ribosome is a large ribonucleoprotein complex responsible for the synthesis of proteins in the cell. Required for pre-rRNA processing and maturation of 40S ribosomal subunits. Part of the small subunit (SSU) processome, first precursor of the small eukaryotic ribosomal subunit. During the assembly of the SSU processome in the nucleolus, many ribosome biogenesis factors, an RNA chaperone and ribosomal proteins associate with the nascent pre-rRNA and work in concert to generate RNA folding, modifications, rearrangements and cleavage as well as targeted degradation of pre-ribosomal RNA by the RNA exosome. This chain is Small ribosomal subunit protein eS19 (Rps19), found in Rattus norvegicus (Rat).